Consider the following 211-residue polypeptide: Imidazole glycerol phosphate synthase subunit HisH (211 aa).

In terms of domain architecture, Glutamine amidotransferase type-1 spans 5 to 211; sequence SVALLDYGSG…QLLRNWVDSL (207 aa). The active-site Nucleophile is the Cys-83. Residues His-192 and Glu-194 contribute to the active site.

Heterodimer of HisH and HisF.

The protein localises to the cytoplasm. It catalyses the reaction 5-[(5-phospho-1-deoxy-D-ribulos-1-ylimino)methylamino]-1-(5-phospho-beta-D-ribosyl)imidazole-4-carboxamide + L-glutamine = D-erythro-1-(imidazol-4-yl)glycerol 3-phosphate + 5-amino-1-(5-phospho-beta-D-ribosyl)imidazole-4-carboxamide + L-glutamate + H(+). The enzyme catalyses L-glutamine + H2O = L-glutamate + NH4(+). It participates in amino-acid biosynthesis; L-histidine biosynthesis; L-histidine from 5-phospho-alpha-D-ribose 1-diphosphate: step 5/9. In terms of biological role, IGPS catalyzes the conversion of PRFAR and glutamine to IGP, AICAR and glutamate. The HisH subunit catalyzes the hydrolysis of glutamine to glutamate and ammonia as part of the synthesis of IGP and AICAR. The resulting ammonia molecule is channeled to the active site of HisF. In Nocardia farcinica (strain IFM 10152), this protein is Imidazole glycerol phosphate synthase subunit HisH.